We begin with the raw amino-acid sequence, 326 residues long: Pectate lyase plyB (326 aa).

The signal sequence occupies residues 1–15 (MRFTPLFLLAAVAIA). 3 residues coordinate Ca(2+): Asp133, Asp162, and Asp166. Arg219 is an active-site residue.

The protein belongs to the polysaccharide lyase 1 family. The cofactor is Ca(2+).

The protein resides in the secreted. It carries out the reaction Eliminative cleavage of (1-&gt;4)-alpha-D-galacturonan to give oligosaccharides with 4-deoxy-alpha-D-galact-4-enuronosyl groups at their non-reducing ends.. It functions in the pathway glycan metabolism; pectin degradation; 2-dehydro-3-deoxy-D-gluconate from pectin: step 2/5. Functionally, pectinolytic enzyme consist of four classes of enzymes: pectin lyase, polygalacturonase, pectin methylesterase and rhamnogalacturonase. Among pectinolytic enzymes, pectin lyase is the most important in depolymerization of pectin, since it cleaves internal glycosidic bonds of highly methylated pectins. This Emericella nidulans (strain FGSC A4 / ATCC 38163 / CBS 112.46 / NRRL 194 / M139) (Aspergillus nidulans) protein is Pectate lyase plyB (plyB).